A 446-amino-acid chain; its full sequence is 3-phosphoshikimate 1-carboxyvinyltransferase (446 aa).

3-phosphoshikimate-binding residues include lysine 26, serine 27, and arginine 31. Lysine 26 lines the phosphoenolpyruvate pocket. Phosphoenolpyruvate contacts are provided by glycine 100 and arginine 128. 3-phosphoshikimate is bound by residues serine 171, serine 172, glutamine 173, serine 200, glutamate 315, and histidine 344. Glutamine 173 is a phosphoenolpyruvate binding site. Residue glutamate 315 is the Proton acceptor of the active site. 3 residues coordinate phosphoenolpyruvate: arginine 348, arginine 389, and lysine 414.

The protein belongs to the EPSP synthase family. As to quaternary structure, monomer.

It is found in the cytoplasm. It catalyses the reaction 3-phosphoshikimate + phosphoenolpyruvate = 5-O-(1-carboxyvinyl)-3-phosphoshikimate + phosphate. It functions in the pathway metabolic intermediate biosynthesis; chorismate biosynthesis; chorismate from D-erythrose 4-phosphate and phosphoenolpyruvate: step 6/7. Its function is as follows. Catalyzes the transfer of the enolpyruvyl moiety of phosphoenolpyruvate (PEP) to the 5-hydroxyl of shikimate-3-phosphate (S3P) to produce enolpyruvyl shikimate-3-phosphate and inorganic phosphate. This Mycolicibacterium gilvum (strain PYR-GCK) (Mycobacterium gilvum (strain PYR-GCK)) protein is 3-phosphoshikimate 1-carboxyvinyltransferase.